The chain runs to 296 residues: Probable lipid kinase YegS-like (296 aa).

The DAGKc domain occupies Met-1–His-130. ATP contacts are provided by residues Thr-37, Gly-63–Glu-69, and Thr-92. 3 residues coordinate Mg(2+): Leu-212, Asp-215, and Leu-217. Glu-268 acts as the Proton acceptor in catalysis.

The protein belongs to the diacylglycerol/lipid kinase family. YegS lipid kinase subfamily. Requires Mg(2+) as cofactor. It depends on Ca(2+) as a cofactor.

It is found in the cytoplasm. Functionally, probably phosphorylates lipids; the in vivo substrate is unknown. This is Probable lipid kinase YegS-like from Yersinia pestis bv. Antiqua (strain Angola).